The primary structure comprises 123 residues: Potassium voltage-gated channel subfamily E member 2 (123 aa).

N-linked (GlcNAc...) asparagine glycans are attached at residues Asn6 and Asn29. Residues 49-69 (VILYLMVMIGMFSFIVVAILV) form a helical membrane-spanning segment. The Cytoplasmic portion of the chain corresponds to 70-123 (STVKSKRREHSQHPYHQYIVEDWQEKYKSQILHLEDSKATIHENMGATGFTVSP).

This sequence belongs to the potassium channel KCNE family. Interacts with KCNB1. Associates with KCNH2/ERG1. May associate with KCNQ2 and KCNQ3. Associates with HCN1 and probably HCN2. Heteromultimer with KCNC2. Interacts with KCNC2. Interacts with KCNQ1. Forms a heterooligomer complex with KCNQ1 that targets to the membrane raft and leading to currents with an apparently instantaneous activation, a rapid deactivation process and a linear current-voltage relationship and decreases the amplitude of the outward current.

It localises to the cell membrane. The protein resides in the apical cell membrane. In terms of biological role, ancillary protein that functions as a regulatory subunit of the voltage-gated potassium (Kv) channel complex composed of pore-forming and potassium-conducting alpha subunits and of regulatory beta subunits. KCNE2 beta subunit modulates the gating kinetics and enhances stability of the channel complex. Alters the gating of the delayed rectifier Kv channel containing KCNB1 alpha subunit. Associates with KCNH2/HERG alpha subunit Kv channel to form the rapidly activating component of the delayed rectifying potassium current (IKr) in heart. May associate with KCNQ2 and/or KCNQ3 alpha subunits to modulate the native M-type current. May associate with HCN1 and HCN2 channel subunits to increase potassium current. Forms a heterooligomer complex with KCNQ1/KVLQT1 alpha subunits which leads to currents with an apparently instantaneous activation, a rapid deactivation process and a linear current-voltage relationship and decreases the amplitude of the outward current. KCNQ1-KCNE2 channel associates with Na(+)-coupled myo-inositol symporter in the apical membrane of choroid plexus epithelium and regulates the myo-inositol gradient between blood and cerebrospinal fluid with an impact on neuron excitability. The protein is Potassium voltage-gated channel subfamily E member 2 of Mus musculus (Mouse).